A 318-amino-acid chain; its full sequence is Methionyl-tRNA formyltransferase (318 aa).

112–115 (SILP) lines the (6S)-5,6,7,8-tetrahydrofolate pocket.

Belongs to the Fmt family.

The enzyme catalyses L-methionyl-tRNA(fMet) + (6R)-10-formyltetrahydrofolate = N-formyl-L-methionyl-tRNA(fMet) + (6S)-5,6,7,8-tetrahydrofolate + H(+). Functionally, attaches a formyl group to the free amino group of methionyl-tRNA(fMet). The formyl group appears to play a dual role in the initiator identity of N-formylmethionyl-tRNA by promoting its recognition by IF2 and preventing the misappropriation of this tRNA by the elongation apparatus. This chain is Methionyl-tRNA formyltransferase, found in Shewanella frigidimarina (strain NCIMB 400).